Here is a 673-residue protein sequence, read N- to C-terminus: DNA ligase (673 aa).

NAD(+)-binding positions include 33 to 37 (DAEYD), 82 to 83 (SL), and Glu114. Lys116 functions as the N6-AMP-lysine intermediate in the catalytic mechanism. Positions 137, 174, 291, and 315 each coordinate NAD(+). Zn(2+) is bound by residues Cys409, Cys412, Cys427, and Cys433. The BRCT domain occupies 592 to 673 (AQEQPLAGLV…LINLLEQHNG (82 aa)).

It belongs to the NAD-dependent DNA ligase family. LigA subfamily. Requires Mg(2+) as cofactor. Mn(2+) is required as a cofactor.

It carries out the reaction NAD(+) + (deoxyribonucleotide)n-3'-hydroxyl + 5'-phospho-(deoxyribonucleotide)m = (deoxyribonucleotide)n+m + AMP + beta-nicotinamide D-nucleotide.. DNA ligase that catalyzes the formation of phosphodiester linkages between 5'-phosphoryl and 3'-hydroxyl groups in double-stranded DNA using NAD as a coenzyme and as the energy source for the reaction. It is essential for DNA replication and repair of damaged DNA. This Pseudoalteromonas translucida (strain TAC 125) protein is DNA ligase.